The chain runs to 537 residues: 6-phosphogluconate dehydrogenase, decarboxylating 2, chloroplastic (537 aa).

Residues 1-44 (MRSEVPSSTSPSFLSPPFIHLPLLSLSSPTPLPHSSSSTFSLFS) constitute a chloroplast transit peptide. NADP(+) is bound by residues 55-60 (GLAVMG), 78-80 (NRT), 122-124 (VKA), and Asn150. Substrate is bound by residues Asn150 and 176–178 (SGG). Lys230 (proton acceptor) is an active-site residue. 233-234 (HN) contributes to the substrate binding site. The Proton donor role is filled by Glu237. The substrate site is built by Tyr238, Lys308, Arg335, Arg500, and His506.

It belongs to the 6-phosphogluconate dehydrogenase family. Homodimer.

The protein localises to the plastid. It localises to the chloroplast. The catalysed reaction is 6-phospho-D-gluconate + NADP(+) = D-ribulose 5-phosphate + CO2 + NADPH. Its pathway is carbohydrate degradation; pentose phosphate pathway; D-ribulose 5-phosphate from D-glucose 6-phosphate (oxidative stage): step 3/3. Its function is as follows. Catalyzes the oxidative decarboxylation of 6-phosphogluconate to ribulose 5-phosphate and CO(2), with concomitant reduction of NADP to NADPH. The sequence is that of 6-phosphogluconate dehydrogenase, decarboxylating 2, chloroplastic from Spinacia oleracea (Spinach).